Consider the following 332-residue polypeptide: Glycerol-3-phosphate dehydrogenase [NAD(P)+] (332 aa).

NADPH contacts are provided by tryptophan 13, lysine 34, and lysine 108. Residues lysine 108, glycine 136, and serine 138 each coordinate sn-glycerol 3-phosphate. Alanine 140 is an NADPH binding site. Sn-glycerol 3-phosphate-binding residues include lysine 191, aspartate 244, serine 254, arginine 255, and asparagine 256. Lysine 191 (proton acceptor) is an active-site residue. An NADPH-binding site is contributed by arginine 255. NADPH is bound by residues valine 279 and glutamate 281.

It belongs to the NAD-dependent glycerol-3-phosphate dehydrogenase family.

The protein localises to the cytoplasm. The catalysed reaction is sn-glycerol 3-phosphate + NAD(+) = dihydroxyacetone phosphate + NADH + H(+). It carries out the reaction sn-glycerol 3-phosphate + NADP(+) = dihydroxyacetone phosphate + NADPH + H(+). Its pathway is membrane lipid metabolism; glycerophospholipid metabolism. Functionally, catalyzes the reduction of the glycolytic intermediate dihydroxyacetone phosphate (DHAP) to sn-glycerol 3-phosphate (G3P), the key precursor for phospholipid synthesis. The protein is Glycerol-3-phosphate dehydrogenase [NAD(P)+] of Francisella tularensis subsp. tularensis (strain FSC 198).